The primary structure comprises 73 residues: Translation initiation factor IF-1 (73 aa).

The region spanning 1–73 (MGKKEEAFEV…TKGRIVYRER (73 aa)) is the S1-like domain.

This sequence belongs to the IF-1 family. As to quaternary structure, component of the 30S ribosomal translation pre-initiation complex which assembles on the 30S ribosome in the order IF-2 and IF-3, IF-1 and N-formylmethionyl-tRNA(fMet); mRNA recruitment can occur at any time during PIC assembly.

It localises to the cytoplasm. Its function is as follows. One of the essential components for the initiation of protein synthesis. Stabilizes the binding of IF-2 and IF-3 on the 30S subunit to which N-formylmethionyl-tRNA(fMet) subsequently binds. Helps modulate mRNA selection, yielding the 30S pre-initiation complex (PIC). Upon addition of the 50S ribosomal subunit IF-1, IF-2 and IF-3 are released leaving the mature 70S translation initiation complex. In Rhodopirellula baltica (strain DSM 10527 / NCIMB 13988 / SH1), this protein is Translation initiation factor IF-1.